The following is a 1141-amino-acid chain: Tetratricopeptide repeat protein 17 (1141 aa).

The stretch at 295-328 (FTSYYTLGNIYAMLGEYNHSVLCYDHALQARPGF) is one TPR 1 repeat. Residues 340-382 (CQQKLEQKLEAQHRSLQRTLNELKEYQKQHDHYLRQQEILEKH) adopt a coiled-coil conformation. 5 TPR repeats span residues 619–652 (WLIL…APLQ), 689–722 (PLTF…TTKC), 1014–1048 (SWVL…APHQ), 1051–1084 (DVPL…APHF), and 1085–1118 (AVNH…QPEF).

Belongs to the TTC17 family. Interacts with CATIP. Expressed in germ cells as well as in somatic cells of the testis (at protein level).

The protein localises to the cytoplasm. The protein resides in the cell membrane. Its subcellular location is the cytoskeleton. In terms of biological role, plays a role in primary ciliogenesis by modulating actin polymerization. In Homo sapiens (Human), this protein is Tetratricopeptide repeat protein 17 (TTC17).